Here is a 390-residue protein sequence, read N- to C-terminus: GTPase Obg (390 aa).

The Obg domain maps to 1–159 (MKFVDEASIL…RELLLELMLL (159 aa)). The tract at residues 127–147 (NTRFKSSVNRTPRQKTNGTPG) is disordered. A compositionally biased stretch (polar residues) spans 129-145 (RFKSSVNRTPRQKTNGT). Positions 160–333 (ADVGMLGMPN…LCWDVMTFIL (174 aa)) constitute an OBG-type G domain. GTP is bound by residues 166-173 (GMPNAGKS), 191-195 (FTTLV), 213-216 (DIPG), 283-286 (NKID), and 314-316 (SAA). Positions 173 and 193 each coordinate Mg(2+).

This sequence belongs to the TRAFAC class OBG-HflX-like GTPase superfamily. OBG GTPase family. Monomer. Mg(2+) serves as cofactor.

The protein resides in the cytoplasm. In terms of biological role, an essential GTPase which binds GTP, GDP and possibly (p)ppGpp with moderate affinity, with high nucleotide exchange rates and a fairly low GTP hydrolysis rate. Plays a role in control of the cell cycle, stress response, ribosome biogenesis and in those bacteria that undergo differentiation, in morphogenesis control. This chain is GTPase Obg, found in Shigella sonnei (strain Ss046).